A 284-amino-acid polypeptide reads, in one-letter code: Gigasin-3a (284 aa).

The interval 202-284 (GLDNPLPNPR…FKAGRKNNRN (83 aa)) is disordered. Over residues 223–245 (SSPLPESTPKSSTKTSSASPIKS) the composition is skewed to low complexity. A compositionally biased stretch (basic residues) spans 246–257 (RQGKKLRGKKQN). Over residues 258–267 (KTGNTRFTYR) the composition is skewed to polar residues. Over residues 268–284 (NNKRNIKFKAGRKNNRN) the composition is skewed to basic residues.

In terms of tissue distribution, component of the organic matrix of calcified shell layers.

This Magallana gigas (Pacific oyster) protein is Gigasin-3a.